A 614-amino-acid polypeptide reads, in one-letter code: MSNLKRFDDEERESKYGRVFAVSGPVVTAEAMSGSAMYELVRVGYYELVGEIIRLEGDMATIQVYEETSGVTVGDPVLRTGKPLSVELGPGIMGSIFDGIQRPLKDINELTESIYIPKGVNVPSLSRVASWEFNPLNVKVGSHITGGDLYGLVHENTLVKHKMIVNPRAKGTVRYIAPSGNYKVDDVVLETEFDGEITKHTMLQVWPVRQPRPVTEKLPANHPLLTGQRVLDSLFPCVQGGTTAIPGAFGCGKTVISQALSKYSNSDVIIYVGCGERGNEMSEVLRDFPELSVEIDGVTESIMKRTALVANTSNMPVAAREASIYTGITLSEYFRDMGYNVSMMADSTSRWAEALREISGRLAEMPADSGYPAYLGARLASFYERAGRVKCLGNPEREGSVSIVGAVSPPGGDFSDPVTSATLGIVQVFWGLDKKLAQRKHFPSINWLISYSKYMRALDDFYDKNFPEFVPLRTKVKEILQEEEDLSEIVQLVGKASLAETDKITLEVAKLLKDDFLQQNSYSSYDRFCPFYKTVGMLRNIIDFYDMARHSVESTAQSENKITWNVIREAMGNIMYQLSSMKFKDPVKDGEAKIKADFEQLHEDLQQAFRNLED.

Serine 142 carries the post-translational modification Phosphoserine. Glycine 247 to threonine 254 serves as a coordination point for ATP.

The protein belongs to the ATPase alpha/beta chains family. In terms of assembly, V-ATPase is a heteromultimeric enzyme made up of two complexes: the ATP-hydrolytic V1 complex and the proton translocation V0 complex. The V1 complex consists of three catalytic AB heterodimers that form a heterohexamer, three peripheral stalks each consisting of EG heterodimers, one central rotor including subunits D and F, and the regulatory subunits C and H. The proton translocation complex V0 consists of the proton transport subunit a, a ring of proteolipid subunits c9c'', rotary subunit d, subunits e and f, and the accessory subunits VhaAC45 and ATP6AP2.

It catalyses the reaction ATP + H2O + 4 H(+)(in) = ADP + phosphate + 5 H(+)(out). Its activity is regulated as follows. ATP hydrolysis occurs at the interface between the nucleotide-binding domains of subunits A and B. ATP hydrolysis triggers a conformational change in the subunits D and F, which induces a shift of subunit d. The c-ring is subsequently rotated and results in a continuous proton translocation across the membrane. Functionally, catalytic subunit of the V1 complex of vacuolar(H+)-ATPase (V-ATPase), a multisubunit enzyme composed of a peripheral complex (V1) that hydrolyzes ATP and a membrane integral complex (V0) that translocates protons. V-ATPase is responsible for acidifying and maintaining the pH of intracellular compartments and in some cell types, is targeted to the plasma membrane, where it is responsible for acidifying the extracellular environment. The protein is V-type proton ATPase catalytic subunit A isoform 2 (Vha68-2) of Drosophila melanogaster (Fruit fly).